Reading from the N-terminus, the 157-residue chain is Transcriptional repressor NrdR (157 aa).

Positions 1–21 (MKCPHCGNNGSRVVDSRPTDE) are disordered. Residues 3-34 (CPHCGNNGSRVVDSRPTDEGRVIRRRRECEKC) fold into a zinc finger. In terms of domain architecture, ATP-cone spans 49-139 (LLVIKKNGSR…VYRQFKDMHV (91 aa)).

Belongs to the NrdR family. Requires Zn(2+) as cofactor.

Its function is as follows. Negatively regulates transcription of bacterial ribonucleotide reductase nrd genes and operons by binding to NrdR-boxes. This chain is Transcriptional repressor NrdR, found in Pediococcus pentosaceus (strain ATCC 25745 / CCUG 21536 / LMG 10740 / 183-1w).